Reading from the N-terminus, the 148-residue chain is UPF0179 protein UNCMA_27840 (148 aa).

It belongs to the UPF0179 family.

In Methanocella arvoryzae (strain DSM 22066 / NBRC 105507 / MRE50), this protein is UPF0179 protein UNCMA_27840.